The primary structure comprises 416 residues: Iron/alpha-ketoglutarate-dependent dioxygenase asqJ (416 aa).

The tract at residues 1–53 (MGYPKAFTSSDSEPEPDLSRDLGNPVMGNPGVVSRSSSTVAQHSVRNNPTGPD) is disordered. The span at 34–50 (SRSSSTVAQHSVRNNPT) shows a compositional bias: polar residues. Fe cation contacts are provided by histidine 242, aspartate 244, and histidine 319.

Belongs to the PhyH family. As to quaternary structure, homodimer. Fe cation serves as cofactor.

The enzyme catalyses (-)-4'-methoxycyclopeptine + 2-oxoglutarate + O2 = (Z)-4'-methoxydehydrocyclopeptine + succinate + CO2 + H2O. The catalysed reaction is (Z)-4'-methoxydehydrocyclopeptine + 2-oxoglutarate + O2 = (-)-4'-methoxycyclopenine + succinate + CO2. It carries out the reaction (-)-cyclopeptine + 2-oxoglutarate + O2 = (Z)-dehydrocyclopeptine + succinate + CO2 + H2O. It catalyses the reaction (Z)-dehydrocyclopeptine + 2-oxoglutarate + O2 = (-)-cyclopenine + succinate + CO2. Its pathway is secondary metabolite biosynthesis. The protein operates within alkaloid biosynthesis. It functions in the pathway mycotoxin biosynthesis. Iron/alpha-ketoglutarate-dependent dioxygenase; part of the gene cluster that mediates the biosynthesis of the aspoquinolone mycotoxins. Within the pathway, the iron/alpha-ketoglutarate-dependent dioxygenase asqJ acts as a (-)-cyclopenine synthase that converts 4'-methoxycyclopeptin into 4'-methoxydehydrocyclopeptin through dehydrogenation to form a double bond between C-alpha and C-beta of the O-methyltyrosine side chain. AsqJ is a very unique dioxygenase which is capable of catalyzing radical-mediated dehydrogenation and epoxidation reactions sequentially on a 6,7-benzo-diazepinedione substrate in the 4'-methoxyviridicatin biosynthetic pathway. AsqJ is also capable of converting cyclopeptin into dehydrocyclopeptin. The first step of the pathway is catalyzed by the nonribosomal peptide synthetase asqK that condenses anthranilic acid and O-methyl-L-tyrosine to produce 4'-methoxycyclopeptin. 4'-methoxycyclopeptin is then converted to 4'-methoxydehydrocyclopeptin by the ketoglutarate-dependent dioxygenase asqJ. AsqJ also converts its first product 4'-methoxydehydrocyclopeptin to 4'-methoxycyclopenin. The following conversion of 4'-methoxycyclopenin into 4'-methoxyviridicatin is catalyzed by the cyclopenase asqI. 4'-methoxyviridicatin is the precursor of quinolone natural products, and is further converted to quinolinone B. The prenyltransferase asqH1 then catalyzes the canonical Friedel-Crafts alkylation of quinolinone B with dimethylallyl cation to yield dimethylallyl quinolone, which is subjected to FAD-dependent dehydrogenation by the FAD-linked oxidoreductase asqF to yield conjugated aryl diene. The delta(3') double bond then serves as the site of the second alkylation with DMAPP catalyzed by the prenyltransferase asqH2 to yield a carbenium ion intermediate, which can be attacked by H(2)O to yield a styrenyl quinolone containing a C3'-hydroxyprenyl chain. The FAD-dependent monooxygenase asqG performs epoxidation of the terminal C7'-C8' olefin. Finally, after dehydratation of the epoxide at C3 by asqC, the quinolone epoxide rearrangement protein asqO catalyzes an enzymatic 3-exo-tet cyclization to yield the cyclopropyl-THF ring system in aspoquinolone. The chain is Iron/alpha-ketoglutarate-dependent dioxygenase asqJ from Emericella nidulans (strain FGSC A4 / ATCC 38163 / CBS 112.46 / NRRL 194 / M139) (Aspergillus nidulans).